Reading from the N-terminus, the 266-residue chain is Small ribosomal subunit protein eS1 (266 aa).

Positions 235–266 are disordered; that stretch reads GGAGGAAKASGDDTGAKVERADGYEPPIQETV. Residues 244 to 257 show a composition bias toward basic and acidic residues; that stretch reads SGDDTGAKVERADG.

The protein belongs to the eukaryotic ribosomal protein eS1 family. As to quaternary structure, component of the small ribosomal subunit. Mature ribosomes consist of a small (40S) and a large (60S) subunit. The 40S subunit contains about 33 different proteins and 1 molecule of RNA (18S). The 60S subunit contains about 49 different proteins and 3 molecules of RNA (28S, 5.8S and 5S).

Its subcellular location is the cytoplasm. Functionally, component of the small ribosomal subunit. The ribosome is a large ribonucleoprotein complex responsible for the synthesis of proteins in the cell. The protein is Small ribosomal subunit protein eS1 (rps3a) of Oryzias latipes (Japanese rice fish).